A 79-amino-acid chain; its full sequence is uncharacterized protein (79 aa).

A helical transmembrane segment spans residues 15–37; the sequence is KSIVSVLALTSLGCGVFVISATA.

The protein resides in the membrane. This is an uncharacterized protein from Dictyostelium discoideum (Social amoeba).